The chain runs to 1162 residues: MAAARNATPTPQNGRDASRLSFAKITDTLTVPDLLALQTESFDWLVGSDAWKRRVEEGTKQGRTDLALNSGLEEIFEEISPIEDLGETMQLGFTNPYLEEQKYSIDECKERGKTYSAPLYVEAEFMNHLTGEIKTQTVFMGDFPLMTEKGTFIINGTERVVVSQLVRSPGVYFERQQEKTSDKDIYSARVIPSRGAWLEFEIDKRDQVGVRIDRKRKQSVTVFLKALGLTSEQILEEFKGVASIELTLEKDSILTKEEALKDIYRKLRPGEQVAAEAARALLDNFYFNPKRYDLAKVGRYKINRKLGIDKQLTDSVLTVEDILATIKYLVSLHANETKMNGTRDGKPVELRLDVDDIDHFGNRRIRAVGELIQNQVRTGLSRMERVVRERMTTQDIEAITPQTLINVRPVVAAIKEFFGTSQLSQFMDQNNPLAGLTHKRRLSALGPGGLSRERAGVEVRDVHPSHYGRMCPIETPEGPNIGLIGSLASFARINSFGFIETPYRRVVDGVVTDQIDYLTASEEDEFLVAQANAPLTKDFRFAEDRVLVRPKGGEVELVAKENVHYMDVSPRQMVSVATSLIPFLEHDDANRALMGANMQRQAVPLLRSESPLVGTGMEGYAAIDAGDVLTADASGVVAEVSAEVVTIQLDEGGTQTYYLRKFDRSNQGTSYNHRVLVSAGDRIEAGEVIADGPATENGELALGKNLLVAFMPWEGHNFEDAIILSQNLVKDDTLSSIHIEEYEVDARDTKLGKEEITRDLPNVSPELLADLDERGIIRIGAEVRPGDILVGKVTPKGETELSAEERLLRAIFNEKSREVRDTSLKVPHGEQGTIIGVKVFDSQDGDDELGSGVNQRVVVFIAQKRKITEGDKLAGRHGNKGVISKILPVEDMPFLADGTPVDVILNPLGIPGRMNFGQVLETHLGWSAKQGWEVEGKPKWAERLPDHARQAPAGTKVATPVFDGALEEEIAGLLDSTTVTRDGDRLIGSSGKTRLFDGRSGEPFPEPVSVGYMYILKLHHLVDDKIHARSTGPYSMITQQPLGGKAQFGGQRFGEMEVWALEAYGAAYALQELLTIKSDDILGRVKVYEAIVKGENIQEPGIPESFKVLIKEMQSLCLNVEVLSADGQAVSLRDTDDEVFRAAEELGINISTRFESSSIDDI.

It belongs to the RNA polymerase beta chain family. As to quaternary structure, the RNAP catalytic core consists of 2 alpha, 1 beta, 1 beta' and 1 omega subunit. When a sigma factor is associated with the core the holoenzyme is formed, which can initiate transcription.

The catalysed reaction is RNA(n) + a ribonucleoside 5'-triphosphate = RNA(n+1) + diphosphate. DNA-dependent RNA polymerase catalyzes the transcription of DNA into RNA using the four ribonucleoside triphosphates as substrates. This is DNA-directed RNA polymerase subunit beta from Clavibacter sepedonicus (Clavibacter michiganensis subsp. sepedonicus).